The primary structure comprises 263 residues: Pro-opiomelanocortin (263 aa).

Residues 1-26 (MLQPVWHACILAILGVFIFHVGEVRS) form the signal peptide. Pyrrolidone carboxylic acid is present on Gln-27. Phe-87 bears the Phenylalanine amide mark. N-linked (GlcNAc...) asparagine glycosylation occurs at Asn-91. Residues 107 to 141 (EDIANYPILNLFLGSDNQNTQEGIMEDDALDRQDS) constitute a propeptide that is removed on maturation. At Val-156 the chain carries Valine amide.

This sequence belongs to the POMC family. In terms of processing, specific enzymatic cleavages at paired basic residues yield the different active peptides.

Its subcellular location is the secreted. In terms of biological role, stimulates the adrenal glands to release cortisol. Anorexigenic peptide. Increases the pigmentation of skin by increasing melanin production in melanocytes. Functionally, increases the pigmentation of skin by increasing melanin production in melanocytes. Its function is as follows. Endogenous orexigenic opiate. In terms of biological role, endogenous opiate. This chain is Pro-opiomelanocortin (pomc), found in Aquarana catesbeiana (American bullfrog).